The chain runs to 340 residues: 4-hydroxy-2-oxovalerate aldolase (340 aa).

One can recognise a Pyruvate carboxyltransferase domain in the interval 8 to 260; the sequence is VILHDMSLRD…SHGINLYDIM (253 aa). 16–17 lines the substrate pocket; the sequence is RD. D17 is a binding site for Mn(2+). H20 (proton acceptor) is an active-site residue. 2 residues coordinate substrate: S170 and H199. H199 and H201 together coordinate Mn(2+). Position 290 (Y290) interacts with substrate.

It belongs to the 4-hydroxy-2-oxovalerate aldolase family.

The enzyme catalyses (S)-4-hydroxy-2-oxopentanoate = acetaldehyde + pyruvate. The polypeptide is 4-hydroxy-2-oxovalerate aldolase (Shewanella pealeana (strain ATCC 700345 / ANG-SQ1)).